A 308-amino-acid polypeptide reads, in one-letter code: MKSLALLLSLLINFSIGSYINFIPYDNSDCTGAINGGGWSILEYACFSIDVRYNYQFTTHTLNGEGFVQWTQFPRVVGKTQCFYQDLPISNASIGSCYKNNPLSTFDIFRSLPSNQYYLISVTSEPFYPTNQAGMIVLQYMGNGECSNDNVEIMQYFTNNTQSEDGITGIQMKWYCNDENEPYETQCFNGKNCFDMPQQYKCSPTHPFFNTSDEISGGTGAGDYSGTGSGSSSGNSGTSDGGSSGSGSGSGSGAFISIIDQNDKNNNKNNNKNKNNNNNNNNYNQYEKSTGDGGITKPHDNYISSFCT.

An N-terminal signal peptide occupies residues 1–17; that stretch reads MKSLALLLSLLINFSIG. N-linked (GlcNAc...) asparagine glycosylation is found at Asn13, Asn91, Asn159, and Asn210. Positions 213 to 308 are disordered; that stretch reads DEISGGTGAG…HDNYISSFCT (96 aa). Composition is skewed to gly residues over residues 217 to 231 and 239 to 252; these read GGTG…GSGS and SDGG…GSGS. Residues 267-284 show a composition bias toward low complexity; sequence NKNNNKNKNNNNNNNNYN.

It localises to the secreted. This is an uncharacterized protein from Dictyostelium discoideum (Social amoeba).